The chain runs to 91 residues: Ixochymostatin (91 aa).

A signal peptide spans 1–20; the sequence is MKTYVLQALLLTLAVAVVRA. 5 disulfide bridges follow: cysteine 34–cysteine 70, cysteine 43–cysteine 66, cysteine 48–cysteine 62, cysteine 53–cysteine 90, and cysteine 72–cysteine 84. Residues 34–90 form the TIL domain; that stretch reads CAEGETWKECVGSSCAELTCEHPEPSLGCTYDCNYGCYCAPDFFRNANKECVKKDKC.

The protein belongs to the serine protease inhibitor-like (TIL domain-containing) family. In terms of tissue distribution, salivary gland. Midgut.

The protein localises to the secreted. Functionally, tight-binding competitive inhibitor of chymotrypsin-like proteases; inhibits host chymase, cathepsin G (CTSG) and chymotrypsin. Inhibits chymase-mediated generation of vasoconstrictor peptides: angiotensin II and endothelin I. Reduces chymase-mediated vascular permeability and vascular endothelial-cadherin degradation. The chain is Ixochymostatin from Ixodes scapularis (Black-legged tick).